The following is a 460-amino-acid chain: Zinc transporter 6 (460 aa).

Over 1 to 33 (MGTIHLFRKSQRSLVGKLTHEFRLVAADRRSWK) the chain is Cytoplasmic. A helical transmembrane segment spans residues 34–54 (ILLFGAINLICIGFLLMWCSS). The Extracellular portion of the chain corresponds to 55–64 (TNSIALTAYT). The chain crosses the membrane as a helical span at residues 65–85 (YLTIFDLFSLITCLISYWVMV). At 86-98 (KKPSPVYSFGFER) the chain is on the cytoplasmic side. The chain crosses the membrane as a helical span at residues 99 to 119 (FEVLAVFASTVLAQLGALFIL). Residues 120-134 (KESAERFLEQPEIHT) lie on the Extracellular side of the membrane. The helical transmembrane segment at 135 to 155 (GRLLVGTFVALFFNLFTMLSV) threads the bilayer. The Cytoplasmic segment spans residues 156–200 (RNKPFAYVSEAASTSWLQEHVADLSRSICGIIPGLSSIFLPRMNP). The helical transmembrane segment at 201–221 (FVLIDIAGALALCITYMLIEI) threads the bilayer. The Extracellular segment spans residues 222–228 (NNYYAVD). The chain crosses the membrane as a helical span at residues 229–249 (TASAIAIALMTFGTMYPMSVY). Residues 250–460 (SGKVLLQTTP…GTNTRGQSRP (211 aa)) are Cytoplasmic-facing. The tract at residues 372-392 (PVTSTPAKPSSPPPEFSFNTP) is disordered.

Belongs to the cation diffusion facilitator (CDF) transporter (TC 2.A.4) family. SLC30A subfamily. Heterodimer with SLC30A5; form a functional zinc ion transmembrane transporter.

Its subcellular location is the golgi apparatus. It is found in the trans-Golgi network membrane. Has probably no intrinsic transporter activity but together with SLC30A5 forms a functional zinc ion:proton antiporter heterodimer, mediating zinc entry into the lumen of organelles along the secretory pathway. As part of that zinc ion:proton antiporter, contributes to zinc ion homeostasis within the early secretory pathway and regulates the activation and folding of enzymes like alkaline phosphatases and enzymes involved in phosphatidylinositol glycan anchor biosynthesis. The protein is Zinc transporter 6 (SLC30A6) of Gallus gallus (Chicken).